A 120-amino-acid polypeptide reads, in one-letter code: Large ribosomal subunit protein bL19 (120 aa).

The protein belongs to the bacterial ribosomal protein bL19 family.

This protein is located at the 30S-50S ribosomal subunit interface and may play a role in the structure and function of the aminoacyl-tRNA binding site. The polypeptide is Large ribosomal subunit protein bL19 (Chlorobium chlorochromatii (strain CaD3)).